The chain runs to 920 residues: MATTVKVLAKELKRTAPDLLEQLKAAGIEKGSEDDSITEKDKTVLLEHLQKEHGSAETGARKKITLIKRENSEIRQADSAGRTRTVQVEVRKKRVLVKRSDEAAALEVEEAPAKVIAPTEPVKSILSAEELEKRAAEATRQAELLARQEAEMKAAEEARQKEVAAPVVEKEEKPVDNAPDAAATAAEKKATADKAAKDLAATKEKELADIRVRRAAAEAEALAIRDMMSAPARVLKAPSEIAAEEAKKGTLHKPAKPEGADDKKKAVAKVGGKTIKSAETSSTWQEEGAKKPGGLKTRGDSSGGVGGWRSGGGRKKQRQIAEANVDTNFQVPTEPVVRDVHVPETITVAELAHAMAVKSAEVIKLLMGMGQMVTINQVLDQDTAMIIVEEMGHTAHAAKLDDPDLDLGTDGHDAELLPRPPVVTVMGHVDHGKTSLLDKIRAAKVATGEAGGITQHIGAYHVETPRGMITFLDTPGHEAFTAMRARGAKATDIVILVVAADDGVMPQTKEAIHHALAGGVPIVVAINKIDKPEANSERVKTELVAEQVVPEEYGGDVPFIPVSAKTGEGIDALLENVLLQAEILELKAAKDAPAQGLVIEARLDKGKGPVATILVQSGTLKRGDMLLAGSTYGRVRAMLDENGKPCNEAGPSIPVEIQGLGDVPAAGESVQVVPDERKAREIALFRQGKFRDVKLAKQQAFKLETMMENMEEGAVEAKLLPVIIKADVQGSQEALAQSLMKLSTPEVKVQIVHAGVGGITETDVNLAVASKAVIFGFNSRADAAARKLAENNGVDIRYHNIIYDAVDEVKLALSGMLTPDKKEEITGLVEIRQVFLVSKVGAIAGCLVVDGIVKRTSSVRLLRDNVVIWTGELDSLKRFKDDAKEVRAGVECGLSLKGYNDIKEGDQLEVFEVTEVARSL.

Basic and acidic residues-rich tracts occupy residues 149–175 (EAEM…EKPV), 186–197 (AEKKATADKAAK), and 255–265 (AKPEGADDKKK). 2 disordered regions span residues 149-197 (EAEM…KAAK) and 245-319 (EAKK…KQRQ). A compositionally biased stretch (gly residues) spans 301–311 (SSGGVGGWRSG). Residues 418–585 (PRPPVVTVMG…NVLLQAEILE (168 aa)) form the tr-type G domain. Residues 427–434 (GHVDHGKT) are G1. 427–434 (GHVDHGKT) lines the GTP pocket. The G2 stretch occupies residues 452 to 456 (GITQH). The G3 stretch occupies residues 473-476 (DTPG). Residues 473–477 (DTPGH) and 527–530 (NKID) contribute to the GTP site. A G4 region spans residues 527–530 (NKID). The G5 stretch occupies residues 563–565 (SAK).

Belongs to the TRAFAC class translation factor GTPase superfamily. Classic translation factor GTPase family. IF-2 subfamily.

The protein localises to the cytoplasm. Functionally, one of the essential components for the initiation of protein synthesis. Protects formylmethionyl-tRNA from spontaneous hydrolysis and promotes its binding to the 30S ribosomal subunits. Also involved in the hydrolysis of GTP during the formation of the 70S ribosomal complex. This is Translation initiation factor IF-2 from Polynucleobacter asymbioticus (strain DSM 18221 / CIP 109841 / QLW-P1DMWA-1) (Polynucleobacter necessarius subsp. asymbioticus).